Reading from the N-terminus, the 87-residue chain is Putative regulatory protein CHY_1489 (87 aa).

The protein belongs to the RemA family.

This is Putative regulatory protein CHY_1489 from Carboxydothermus hydrogenoformans (strain ATCC BAA-161 / DSM 6008 / Z-2901).